A 99-amino-acid chain; its full sequence is U1-theraphotoxin-Lsp1a (99 aa).

Residues M1 to A23 form the signal peptide. A propeptide spanning residues A24–R50 is cleaved from the precursor. Cystine bridges form between C54–C67, C58–C91, C72–C74, and C85–C96.

Belongs to the neurotoxin 12 (Hwtx-2) family. 04 (lasiotoxin) subfamily. Expressed by the venom gland.

Its subcellular location is the secreted. Toxin that causes irreversible contractile paralysis into adult Aedes aegypti resulting in 100% mortality after 24 hours. The chain is U1-theraphotoxin-Lsp1a from Lasiodora sp. (strain IBSP 8539) (Brazilian salmon pink birdeater).